The primary structure comprises 185 residues: Proton-translocating ferredoxin:NAD(+) oxidoreductase complex subunit G (185 aa).

Residues 14–34 traverse the membrane as a helical segment; that stretch reads TKNLTITCFISGIIIAAVYYI. At T161 the chain carries FMN phosphoryl threonine.

Belongs to the RnfG family. As to quaternary structure, the complex is composed of six subunits: RnfA, RnfB, RnfC, RnfD, RnfE and RnfG. Requires FMN as cofactor.

The protein localises to the cell membrane. Its function is as follows. Part of a membrane-bound complex that couples electron transfer with translocation of ions across the membrane. Couples electron transfer from reduced ferredoxin to NAD(+) with translocation of H(+) out of the cell. Essential for energy conservation during autotrophic growth. Contributes to ATP synthesis during heterotrophic growth. In Clostridium ljungdahlii (strain ATCC 55383 / DSM 13528 / PETC), this protein is Proton-translocating ferredoxin:NAD(+) oxidoreductase complex subunit G.